The chain runs to 207 residues: dTTP/UTP pyrophosphatase (207 aa).

Asp79 functions as the Proton acceptor in the catalytic mechanism.

This sequence belongs to the Maf family. YhdE subfamily. Requires a divalent metal cation as cofactor.

Its subcellular location is the cytoplasm. The catalysed reaction is dTTP + H2O = dTMP + diphosphate + H(+). It catalyses the reaction UTP + H2O = UMP + diphosphate + H(+). Nucleoside triphosphate pyrophosphatase that hydrolyzes dTTP and UTP. May have a dual role in cell division arrest and in preventing the incorporation of modified nucleotides into cellular nucleic acids. The sequence is that of dTTP/UTP pyrophosphatase from Rhodopseudomonas palustris (strain ATCC BAA-98 / CGA009).